The primary structure comprises 429 residues: Protein S-Myc (429 aa).

Tyr-36 bears the Phosphotyrosine; by Tyr-kinases mark. Residues 301 to 325 (PLPYAEDARPLKKPRSQDPLGPLKC) form a disordered region. The region spanning 346-398 (ERRRNHNRMERQRRDIMRSSFLNLRDLVPELVHNEKAAKVVILKKATEYIHTL) is the bHLH domain. Positions 398–419 (LQTDESKLLVEREKLYERKQQL) are leucine-zipper.

In terms of assembly, efficient DNA binding requires dimerization with another bHLH protein.

The protein localises to the nucleus. In terms of biological role, has apoptosis-inducing activity. This Rattus norvegicus (Rat) protein is Protein S-Myc (Mycs).